The chain runs to 166 residues: 16S rRNA aminocarboxypropyltransferase (166 aa).

The S-adenosyl-L-methionine site is built by Thr-17, Ile-62, Leu-84, Tyr-99, and Ser-103.

Belongs to the TDD superfamily. TSR3 family.

The protein localises to the cytoplasm. The enzyme catalyses an N(1)-methylpseudouridine in rRNA + S-adenosyl-L-methionine = N(1)-methyl-N(3)-[(3S)-3-amino-3-carboxypropyl]pseudouridine in rRNA + S-methyl-5'-thioadenosine + H(+). Aminocarboxypropyltransferase that catalyzes the aminocarboxypropyl transfer on pseudouridine corresponding to position 914 in M.jannaschii 16S rRNA. It constitutes the last step in biosynthesis of the hypermodified N1-methyl-N3-(3-amino-3-carboxypropyl) pseudouridine (m1acp3-Psi). This chain is 16S rRNA aminocarboxypropyltransferase, found in Saccharolobus islandicus (strain M.16.27) (Sulfolobus islandicus).